The sequence spans 358 residues: D-alanine--D-alanine ligase B (358 aa).

The ATP-grasp domain occupies lysine 147–glutamate 352. Valine 179 to glutamate 234 provides a ligand contact to ATP. 3 residues coordinate Mg(2+): aspartate 305, glutamate 319, and asparagine 321.

The protein belongs to the D-alanine--D-alanine ligase family. Mg(2+) serves as cofactor. Requires Mn(2+) as cofactor.

Its subcellular location is the cytoplasm. The catalysed reaction is 2 D-alanine + ATP = D-alanyl-D-alanine + ADP + phosphate + H(+). It participates in cell wall biogenesis; peptidoglycan biosynthesis. Its function is as follows. Cell wall formation. The polypeptide is D-alanine--D-alanine ligase B (Clostridium tetani (strain Massachusetts / E88)).